Consider the following 58-residue polypeptide: ATP synthase F(0) complex subunit k, mitochondrial (58 aa).

Residues K16 and K17 each carry the N6-acetyllysine modification. A helical membrane pass occupies residues T23–F45.

In terms of assembly, component of the ATP synthase complex composed at least of ATP5F1A/subunit alpha, ATP5F1B/subunit beta, ATP5MC1/subunit c (homooctomer), MT-ATP6/subunit a, MT-ATP8/subunit 8, ATP5ME/subunit e, ATP5MF/subunit f, ATP5MG/subunit g, ATP5MK/subunit k, ATP5MJ/subunit j, ATP5F1C/subunit gamma, ATP5F1D/subunit delta, ATP5F1E/subunit epsilon, ATP5PF/subunit F6, ATP5PB/subunit b, ATP5PD/subunit d, ATP5PO/subunit OSCP. ATP synthase complex consists of a soluble F(1) head domain (subunits alpha(3) and beta(3)) - the catalytic core - and a membrane F(0) domain - the membrane proton channel (subunits c, a, 8, e, f, g, k and j). These two domains are linked by a central stalk (subunits gamma, delta, and epsilon) rotating inside the F1 region and a stationary peripheral stalk (subunits F6, b, d, and OSCP). The ATP synthase complex/complex V exists as a monomeric and a dimeric supercomplex that helps shape mitochondrial cristae to optimize proton flow. Ubiquitous. Highly expressed in skeletal and cardiac muscle. Moderately expressed in brain, thymus, stomach and testis. Lowest expression levels were detected in lung, liver, kidney, adrenal gland, spleen, small intestine and adipose tissue. In streptozotocin-induced diabetes, the insulin-sensitive tissues skeletal and cardiac muscle were down-regulated.

Its subcellular location is the mitochondrion membrane. Subunit k, of the mitochondrial membrane ATP synthase complex (F(1)F(0) ATP synthase or Complex V) that produces ATP from ADP in the presence of a proton gradient across the membrane which is generated by electron transport complexes of the respiratory chain. ATP synthase complex consist of a soluble F(1) head domain - the catalytic core - and a membrane F(1) domain - the membrane proton channel. These two domains are linked by a central stalk rotating inside the F(1) region and a stationary peripheral stalk. During catalysis, ATP synthesis in the catalytic domain of F(1) is coupled via a rotary mechanism of the central stalk subunits to proton translocation. In vivo, can only synthesize ATP although its ATP hydrolase activity can be activated artificially in vitro. Part of the complex F(0) domain. Required for dimerization of the ATP synthase complex and as such regulates ATP synthesis in the mitochondria. This is ATP synthase F(0) complex subunit k, mitochondrial (Atp5mk) from Rattus norvegicus (Rat).